Here is an 83-residue protein sequence, read N- to C-terminus: Putative membrane protein insertion efficiency factor (83 aa).

Belongs to the UPF0161 family.

It localises to the cell membrane. Functionally, could be involved in insertion of integral membrane proteins into the membrane. This Staphylococcus saprophyticus subsp. saprophyticus (strain ATCC 15305 / DSM 20229 / NCIMB 8711 / NCTC 7292 / S-41) protein is Putative membrane protein insertion efficiency factor.